The chain runs to 145 residues: D-aminoacyl-tRNA deacylase (145 aa).

Residues 137 to 138 (GP) carry the Gly-cisPro motif, important for rejection of L-amino acids motif.

The protein belongs to the DTD family. As to quaternary structure, homodimer.

The protein resides in the cytoplasm. The enzyme catalyses glycyl-tRNA(Ala) + H2O = tRNA(Ala) + glycine + H(+). It carries out the reaction a D-aminoacyl-tRNA + H2O = a tRNA + a D-alpha-amino acid + H(+). An aminoacyl-tRNA editing enzyme that deacylates mischarged D-aminoacyl-tRNAs. Also deacylates mischarged glycyl-tRNA(Ala), protecting cells against glycine mischarging by AlaRS. Acts via tRNA-based rather than protein-based catalysis; rejects L-amino acids rather than detecting D-amino acids in the active site. By recycling D-aminoacyl-tRNA to D-amino acids and free tRNA molecules, this enzyme counteracts the toxicity associated with the formation of D-aminoacyl-tRNA entities in vivo and helps enforce protein L-homochirality. In Francisella tularensis subsp. novicida (strain U112), this protein is D-aminoacyl-tRNA deacylase.